Here is a 249-residue protein sequence, read N- to C-terminus: Flagellar L-ring protein (249 aa).

The first 25 residues, 1–25 (MSRLRTSHALRTAAALVAVGCLASG), serve as a signal peptide directing secretion. Residue Cys-26 is the site of N-palmitoyl cysteine attachment. The S-diacylglycerol cysteine moiety is linked to residue Cys-26.

Belongs to the FlgH family. The basal body constitutes a major portion of the flagellar organelle and consists of four rings (L,P,S, and M) mounted on a central rod.

It localises to the cell outer membrane. Its subcellular location is the bacterial flagellum basal body. Assembles around the rod to form the L-ring and probably protects the motor/basal body from shearing forces during rotation. The protein is Flagellar L-ring protein of Afipia carboxidovorans (strain ATCC 49405 / DSM 1227 / KCTC 32145 / OM5) (Oligotropha carboxidovorans).